Reading from the N-terminus, the 354-residue chain is Nicotinate-nucleotide--dimethylbenzimidazole phosphoribosyltransferase (354 aa).

Glu-322 serves as the catalytic Proton acceptor.

Belongs to the CobT family.

It catalyses the reaction 5,6-dimethylbenzimidazole + nicotinate beta-D-ribonucleotide = alpha-ribazole 5'-phosphate + nicotinate + H(+). Its pathway is nucleoside biosynthesis; alpha-ribazole biosynthesis; alpha-ribazole from 5,6-dimethylbenzimidazole: step 1/2. Functionally, catalyzes the synthesis of alpha-ribazole-5'-phosphate from nicotinate mononucleotide (NAMN) and 5,6-dimethylbenzimidazole (DMB). The sequence is that of Nicotinate-nucleotide--dimethylbenzimidazole phosphoribosyltransferase from Solidesulfovibrio magneticus (strain ATCC 700980 / DSM 13731 / RS-1) (Desulfovibrio magneticus).